We begin with the raw amino-acid sequence, 156 residues long: Phosphopantetheine adenylyltransferase (156 aa).

Substrate is bound at residue threonine 9. Residues 9–10 and histidine 17 each bind ATP; that span reads TF. The substrate site is built by lysine 41, leucine 73, and arginine 87. Residues 88–90, glutamate 98, and 123–129 each bind ATP; these read GVR and WVFVSST.

This sequence belongs to the bacterial CoaD family. As to quaternary structure, homohexamer. Mg(2+) serves as cofactor.

It localises to the cytoplasm. The enzyme catalyses (R)-4'-phosphopantetheine + ATP + H(+) = 3'-dephospho-CoA + diphosphate. Its pathway is cofactor biosynthesis; coenzyme A biosynthesis; CoA from (R)-pantothenate: step 4/5. Reversibly transfers an adenylyl group from ATP to 4'-phosphopantetheine, yielding dephospho-CoA (dPCoA) and pyrophosphate. This is Phosphopantetheine adenylyltransferase from Haemophilus influenzae (strain PittEE).